The sequence spans 233 residues: MTSLPGGIYDGDLGDQPMSGLVPMVVEQTTRGERAYDIFSRLLKERIVFIGTPINDQIANLTVAQLLYLASESSEKPINLYINSPGGVIYSGLGVYDTMQYIGAPVSTICVGLAASMGSVLLAAGEDDSRACLPNSRVMIHQPMGGAEGQASDIEIQAEEIMWLKERLYEILALHTGQDIDQIEADADRNYWMSAEEAEEYGLVDNVLNPDNLEGLKSIQPNGEAADDSEDDA.

Ser116 serves as the catalytic Nucleophile. His141 is a catalytic residue. Positions 214-233 (EGLKSIQPNGEAADDSEDDA) are disordered.

Belongs to the peptidase S14 family. In terms of assembly, fourteen ClpP subunits assemble into 2 heptameric rings which stack back to back to give a disk-like structure with a central cavity, resembling the structure of eukaryotic proteasomes.

The protein resides in the cytoplasm. The catalysed reaction is Hydrolysis of proteins to small peptides in the presence of ATP and magnesium. alpha-casein is the usual test substrate. In the absence of ATP, only oligopeptides shorter than five residues are hydrolyzed (such as succinyl-Leu-Tyr-|-NHMec, and Leu-Tyr-Leu-|-Tyr-Trp, in which cleavage of the -Tyr-|-Leu- and -Tyr-|-Trp bonds also occurs).. Its function is as follows. Cleaves peptides in various proteins in a process that requires ATP hydrolysis. Has a chymotrypsin-like activity. Plays a major role in the degradation of misfolded proteins. The protein is ATP-dependent Clp protease proteolytic subunit 2 of Salinibacter ruber (strain DSM 13855 / M31).